Consider the following 307-residue polypeptide: Transcription initiation factor IIB 5 (307 aa).

Residues 19-47 (TTEPCPECGGPVRTNSAETVCADCGLIID) form a TFIIB-type zinc finger. Zn(2+) is bound by residues Cys-23, Cys-26, Cys-39, and Cys-42. Basic and acidic residues-rich tracts occupy residues 54–66 (GPEW…DTAK) and 107–121 (MRRE…STKE). Residues 54–121 (GPEWHRDDAD…SRGRWRSTKE (68 aa)) are disordered. 2 tandem repeats follow at residues 129 to 212 (TEIR…NEEL) and 223 to 304 (QFVP…RLLS).

This sequence belongs to the TFIIB family.

Functionally, stabilizes TBP binding to an archaeal box-A promoter. Also responsible for recruiting RNA polymerase II to the pre-initiation complex (DNA-TBP-TFIIB). This chain is Transcription initiation factor IIB 5, found in Halobacterium salinarum (strain ATCC 700922 / JCM 11081 / NRC-1) (Halobacterium halobium).